Consider the following 218-residue polypeptide: 3-dehydroquinate dehydratase (218 aa).

Residues 29–31 (EFR) and Arg56 each bind 3-dehydroquinate. The active-site Proton donor/acceptor is His116. Lys142 functions as the Schiff-base intermediate with substrate in the catalytic mechanism. 3 residues coordinate 3-dehydroquinate: Arg180, Ser200, and Gln204.

The protein belongs to the type-I 3-dehydroquinase family. As to quaternary structure, homodimer.

It catalyses the reaction 3-dehydroquinate = 3-dehydroshikimate + H2O. The protein operates within metabolic intermediate biosynthesis; chorismate biosynthesis; chorismate from D-erythrose 4-phosphate and phosphoenolpyruvate: step 3/7. In terms of biological role, involved in the third step of the chorismate pathway, which leads to the biosynthesis of aromatic amino acids. Catalyzes the cis-dehydration of 3-dehydroquinate (DHQ) and introduces the first double bond of the aromatic ring to yield 3-dehydroshikimate. The protein is 3-dehydroquinate dehydratase of Methanococcus maripaludis (strain C5 / ATCC BAA-1333).